The primary structure comprises 418 residues: Calreticulin (418 aa).

Residues 1 to 17 (MLLPVPLLLGLLGLAAA) form the signal peptide. The N-domain stretch occupies residues 18 to 197 (EPVVYFKEQF…NSQVESGSLE (180 aa)). Gln26 serves as a coordination point for Ca(2+). Lys48 is subject to N6-acetyllysine. 2 residues coordinate Ca(2+): Lys62 and Lys64. Lys64 carries the post-translational modification N6-(2-hydroxyisobutyryl)lysine. A disulfide bridge links Cys105 with Cys137. 4 residues coordinate an alpha-D-glucoside: Tyr109, Lys111, Tyr128, and Asp135. Lys159 carries the post-translational modification N6-acetyllysine. One copy of the 1-1 repeat lies at 191 to 202 (VESGSLEDDWDF). The segment at 191-255 (VESGSLEDDW…DAKKPEDWDE (65 aa)) is 4 X approximate repeats. Residues 193-277 (SGSLEDDWDF…NPEYKGEWKP (85 aa)) are disordered. Residues 198–308 (DDWDFLPPKK…YSPDANIYAY (111 aa)) are P-domain. Over residues 207 to 251 (KIKDPDASKPEDWDERAKIDDPTDSKPEDWDKPEHIPDPDAKKPE) the composition is skewed to basic and acidic residues. Lys209 carries the post-translational modification N6-acetyllysine. A run of 6 repeats spans residues 210-221 (DPDASKPEDWDE), 227-238 (DPTDSKPEDWDK), 244-255 (DPDAKKPEDWDE), 259-269 (GEWEPPVIQNP), 273-283 (GEWKPRQIDNP), and 287-297 (GTWIHPEIDNP). The tract at residues 237–270 (DKPEHIPDPDAKKPEDWDEEMDGEWEPPVIQNPE) is interaction with PPIB. Over residues 252–261 (DWDEEMDGEW) the composition is skewed to acidic residues. The segment at 259–297 (GEWEPPVIQNPEYKGEWKPRQIDNPDYKGTWIHPEIDNP) is 3 X approximate repeats. Positions 309–418 (DSFAVLGLDL…AAAGQAKDEL (110 aa)) are C-domain. Residue Asp317 participates in an alpha-D-glucoside binding. Asp328 is a binding site for Ca(2+). Positions 349 to 418 (VTKTAEKQMK…AAAGQAKDEL (70 aa)) are disordered. The span at 352–379 (TAEKQMKDKQDEEQRLKEEEEEKKRKEE) shows a compositional bias: basic and acidic residues. Positions 380–409 (EEAEEDEEDKDDKEDEDEDEEDKDEEEEEA) are enriched in acidic residues. The Prevents secretion from ER motif lies at 415–418 (KDEL).

Belongs to the calreticulin family. As to quaternary structure, monomer. Component of an EIF2 complex at least composed of CELF1/CUGBP1, CALR, CALR3, EIF2S1, EIF2S2, HSP90B1 and HSPA5. Interacts with PDIA3/ERp57 and SPACA9. Interacts with TRIM21. Interacts with NR3C1. Interacts with PPIB. Interacts (via P-domain) with PDIA5. Interacts with CLCC1.

It is found in the endoplasmic reticulum lumen. The protein resides in the cytoplasm. The protein localises to the cytosol. Its subcellular location is the secreted. It localises to the extracellular space. It is found in the extracellular matrix. The protein resides in the cell surface. The protein localises to the sarcoplasmic reticulum lumen. Its subcellular location is the cytoplasmic vesicle. It localises to the secretory vesicle. It is found in the cortical granule. The protein resides in the cytolytic granule. Functionally, calcium-binding chaperone that promotes folding, oligomeric assembly and quality control in the endoplasmic reticulum (ER) via the calreticulin/calnexin cycle. This lectin interacts transiently with almost all of the monoglucosylated glycoproteins that are synthesized in the ER. Interacts with the DNA-binding domain of NR3C1 and mediates its nuclear export. Involved in maternal gene expression regulation. May participate in oocyte maturation via the regulation of calcium homeostasis. Present in the cortical granules of non-activated oocytes, is exocytosed during the cortical reaction in response to oocyte activation and might participate in the block to polyspermy. The chain is Calreticulin (CALR) from Oryctolagus cuniculus (Rabbit).